We begin with the raw amino-acid sequence, 459 residues long: NADH oxidase (459 aa).

Asn10 serves as a coordination point for FAD. The Proton acceptor role is filled by His11. Residues Ala12, Asp34, Gln35, Cys44, Val81, Ala110, Ser113, Lys143, and Tyr172 each coordinate FAD. Residue Cys44 is the Redox-active of the active site. Cys44 is subject to Cysteine sulfinic acid (-SO2H). Residues Ile173, Asp192, Tyr201, and Gly256 each coordinate NAD(+). Asp294 contributes to the FAD binding site. Position 310 (Ala310) interacts with NAD(+). Residues Leu311, Ala312, and Ser313 each coordinate FAD. Gly341 serves as a coordination point for NAD(+). Phe439 lines the FAD pocket.

The protein belongs to the class-III pyridine nucleotide-disulfide oxidoreductase family. It depends on FAD as a cofactor.

Its subcellular location is the secreted. The protein localises to the cell wall. It catalyses the reaction 2 NADH + O2 + 2 H(+) = 2 NAD(+) + 2 H2O. Catalyzes the four-electron reduction of molecular oxygen to water. Plays a role in redox balance maintenance. May be involved in mediating bacterial adhesion to host cells. May be considered a potential virulence factor. The sequence is that of NADH oxidase from Streptococcus pneumoniae (strain ATCC BAA-255 / R6).